A 360-amino-acid chain; its full sequence is DNA replication and repair protein RecF (360 aa).

30-37 (GHNGSGKT) contributes to the ATP binding site.

It belongs to the RecF family.

It is found in the cytoplasm. Its function is as follows. The RecF protein is involved in DNA metabolism; it is required for DNA replication and normal SOS inducibility. RecF binds preferentially to single-stranded, linear DNA. It also seems to bind ATP. The polypeptide is DNA replication and repair protein RecF (Haemophilus ducreyi (strain 35000HP / ATCC 700724)).